The chain runs to 446 residues: ATP synthase subunit b-delta (446 aa).

The interval 1–168 is ATP synthase subunit b; that stretch reads MSTFIGQLFG…PATADVDYPL (168 aa). The chain crosses the membrane as a helical span at residues 4 to 24; sequence FIGQLFGFAVIVYLVWRFIVP. The ATP synthase subunit delta stretch occupies residues 169–446; it reads LAKMRSASRR…LAAAEARLPD (278 aa).

The protein in the N-terminal section; belongs to the ATPase B chain family. This sequence in the C-terminal section; belongs to the ATPase delta chain family. F-type ATPases have 2 components, F(1) - the catalytic core - and F(0) - the membrane proton channel. F(1) has five subunits: alpha(3), beta(3), gamma(1), delta(1), epsilon(1). F(0) has three main subunits: a(1), b(2) and c(10-14). The alpha and beta chains form an alternating ring which encloses part of the gamma chain. F(1) is attached to F(0) by a central stalk formed by the gamma and epsilon chains, while a peripheral stalk is formed by the delta and b chains.

The protein localises to the cell membrane. Its function is as follows. F(1)F(0) ATP synthase produces ATP from ADP in the presence of a proton or sodium gradient. F-type ATPases consist of two structural domains, F(1) containing the extramembraneous catalytic core and F(0) containing the membrane proton channel, linked together by a central stalk and a peripheral stalk. During catalysis, ATP synthesis in the catalytic domain of F(1) is coupled via a rotary mechanism of the central stalk subunits to proton translocation. This fusion protein includes a component of the F(0) channel (subunit b) and of the F(1) subunit (subunit delta). Two copies of subunit b and one of delta together form the peripheral 'stator' stalk which links F(1) to F(0). The sequence is that of ATP synthase subunit b-delta (atpFH) from Mycobacterium tuberculosis (strain CDC 1551 / Oshkosh).